The primary structure comprises 189 residues: Putative manganese efflux pump MntP (189 aa).

Helical transmembrane passes span 6-26 (IFGI…AAGV), 39-59 (LAWH…YAGL), 71-91 (WIAF…SFDA), 106-126 (LVLL…SLSV), 131-151 (VWMP…GGLM), and 169-189 (VGAG…GVFY).

Belongs to the MntP (TC 9.B.29) family.

It is found in the cell inner membrane. In terms of biological role, probably functions as a manganese efflux pump. The polypeptide is Putative manganese efflux pump MntP (Desulfosudis oleivorans (strain DSM 6200 / JCM 39069 / Hxd3) (Desulfococcus oleovorans)).